A 425-amino-acid polypeptide reads, in one-letter code: 2-oxoglutarate and iron-dependent oxygenase JMJD4 homolog (425 aa).

The JmjC domain maps to 165–316 (AAQMPGYNFY…MVWQNLKNNL (152 aa)). 3 residues coordinate Fe cation: H212, D214, and H284.

This sequence belongs to the JMJD6 family. It depends on Fe(2+) as a cofactor.

It is found in the nucleus. Its subcellular location is the cytoplasm. It catalyses the reaction L-lysyl-[protein] + 2-oxoglutarate + O2 = 4-hydroxy-L-lysyl-[protein] + succinate + CO2. Functionally, catalyzes the 2-oxoglutarate and iron-dependent C4-lysyl hydroxylation of eRF1 thereby promoting the translational termination efficiency of eRF1. May be involved in regulation of chromatin structure, promoting expansion of heterochromatin. This chain is 2-oxoglutarate and iron-dependent oxygenase JMJD4 homolog, found in Drosophila melanogaster (Fruit fly).